The chain runs to 485 residues: E3 ubiquitin-protein ligase TRIM34A (485 aa).

Residues 15-59 form an RING-type zinc finger; the sequence is CPVCQELLTKALSLGCGHRVCQACLITKKNAVINPREKSSCPVCG. The B box-type zinc-finger motif lies at 91–132; the sequence is TKRDLCVHHGEKLLLFCKEDKKAICWVCERSQEHRGHHTFLW. Residues Cys96, His99, Cys118, and His124 each coordinate Zn(2+). A coiled-coil region spans residues 136–170; the sequence is VRECQENLQKALTRLRKEQEKVETLEADIKEDRLS. The B30.2/SPRY domain occupies 282–485; it reads LSGMLQKFRE…APMTLCPLNS (204 aa).

Belongs to the TRIM/RBCC family. Homotrimer. Interacts (via B-box and SPRY domain) with TRIM5.

It localises to the cytoplasm. The protein localises to the mitochondrion. The catalysed reaction is S-ubiquitinyl-[E2 ubiquitin-conjugating enzyme]-L-cysteine + [acceptor protein]-L-lysine = [E2 ubiquitin-conjugating enzyme]-L-cysteine + N(6)-ubiquitinyl-[acceptor protein]-L-lysine.. Its pathway is protein modification; protein ubiquitination. Functionally, functions as antiviral protein and contributes to the defense against retroviral infections. Acts as a capsid-specific restriction factor with the help of TRIM5 and prevents infection from non-host-adapted retroviruses. During influenza A virus infection, promotes programmed cell death by targeting ZBP1 for 'Lys-63'-linked polyubiquitination. In turn, promotes ZBP1 recruitment of RIPK3 to mediate virus-induced programmed necrosis. Negatively regulates the function of mitochondria by enhancing mitochondrial depolarization leading to cytochrome c release and mitochondria-dependent apoptosis. Also promotes the formation of multinucleated giant cells by means of cell fusion and phagocytosis in epithelial cells. Plays an essential role in sustaining the integrity of the inner mucus layer in the colon by controlling the exocytosis of the major component of colonic mucus MUC2 from colonic goblet cells. The sequence is that of E3 ubiquitin-protein ligase TRIM34A from Mus musculus (Mouse).